The sequence spans 243 residues: Type III pantothenate kinase (243 aa).

6–13 lines the ATP pocket; sequence DIGNTVAK. Substrate contacts are provided by residues Tyr-86 and 93–96; that span reads GYDR. Asp-95 acts as the Proton acceptor in catalysis. Asp-116 lines the K(+) pocket. Position 119 (Thr-119) interacts with ATP. Thr-171 serves as a coordination point for substrate.

This sequence belongs to the type III pantothenate kinase family. In terms of assembly, homodimer. The cofactor is NH4(+). K(+) is required as a cofactor.

It is found in the cytoplasm. The enzyme catalyses (R)-pantothenate + ATP = (R)-4'-phosphopantothenate + ADP + H(+). It participates in cofactor biosynthesis; coenzyme A biosynthesis; CoA from (R)-pantothenate: step 1/5. Catalyzes the phosphorylation of pantothenate (Pan), the first step in CoA biosynthesis. This Bacteroides fragilis (strain YCH46) protein is Type III pantothenate kinase.